Reading from the N-terminus, the 1643-residue chain is Outer membrane protein B (1643 aa).

A propeptide spanning residues 1329–1352 is cleaved from the precursor; sequence GTLRYLSNAETSDVAGSATGAVSS. The 289-residue stretch at 1355–1643 folds into the Autotransporter domain; the sequence is EAEVSYGVWA…QGTLKVRVNF (289 aa).

Belongs to the rickettsiae OmpA/OmpB family.

It is found in the periplasm. It localises to the secreted. The protein resides in the cell surface. Its subcellular location is the cell outer membrane. In terms of biological role, the 120 kDa surface-exposed protein is a major structural protein which may play a role as a rickettsial virulence factor and/or immunogen during infection. The 32 kDa beta peptide may serve as a membrane anchor. It has been shown to adhere to biotinylated Vero cell proteins. The polypeptide is Outer membrane protein B (ompB) (Rickettsia prowazekii (strain Madrid E)).